Consider the following 97-residue polypeptide: MGRSLKKGPYVHPSLIKKIREMNEKGEKKVIKTWSRASMILPEMVGHTIAVHNGMKHIPVYITEQMIGHRLGEFSPTRRFGGHPDKKAVKGKIEKQG.

The tract at residues 74–97 is disordered; it reads FSPTRRFGGHPDKKAVKGKIEKQG. A compositionally biased stretch (basic and acidic residues) spans 82-97; sequence GHPDKKAVKGKIEKQG.

It belongs to the universal ribosomal protein uS19 family.

Protein S19 forms a complex with S13 that binds strongly to the 16S ribosomal RNA. In Petrotoga mobilis (strain DSM 10674 / SJ95), this protein is Small ribosomal subunit protein uS19.